We begin with the raw amino-acid sequence, 493 residues long: Sulfoacetaldehyde dehydrogenase (acylating) (493 aa).

Basic residues predominate over residues 1–10 (MSVQILHRRQ). Residues 1–21 (MSVQILHRRQSNNSDLPLPTA) are disordered. The Nucleophile role is filled by Cys273.

The protein belongs to the aldehyde dehydrogenase family. As to quaternary structure, homodimer.

The protein resides in the cytoplasm. It catalyses the reaction sulfoacetaldehyde + NADP(+) + CoA = sulfoacetyl-CoA + NADPH + H(+). Involved in the degradation of sulfoacetate, a widespread natural product. Catalyzes the conversion of sulfoacetyl-CoA and NADPH to sulfoacetaldehyde, CoA and NADP(+). Specific for NADP(+) and sulfoacetaldehyde. This chain is Sulfoacetaldehyde dehydrogenase (acylating), found in Cupriavidus necator (strain ATCC 17699 / DSM 428 / KCTC 22496 / NCIMB 10442 / H16 / Stanier 337) (Ralstonia eutropha).